We begin with the raw amino-acid sequence, 346 residues long: L-threonine 3-dehydrogenase (346 aa).

Cys42 contacts Zn(2+). Active-site charge relay system residues include Thr44 and His47. Residues His67, Glu68, Cys97, Cys100, Cys103, and Cys111 each coordinate Zn(2+). NAD(+) is bound by residues Ile179, Asp199, Arg204, Leu266–Leu268, and Ile291–Thr292.

The protein belongs to the zinc-containing alcohol dehydrogenase family. In terms of assembly, homotetramer. The cofactor is Zn(2+).

It localises to the cytoplasm. It catalyses the reaction L-threonine + NAD(+) = (2S)-2-amino-3-oxobutanoate + NADH + H(+). The protein operates within amino-acid degradation; L-threonine degradation via oxydo-reductase pathway; glycine from L-threonine: step 1/2. Its function is as follows. Catalyzes the NAD(+)-dependent oxidation of L-threonine to 2-amino-3-ketobutyrate. This chain is L-threonine 3-dehydrogenase, found in Bacillus licheniformis (strain ATCC 14580 / DSM 13 / JCM 2505 / CCUG 7422 / NBRC 12200 / NCIMB 9375 / NCTC 10341 / NRRL NRS-1264 / Gibson 46).